A 163-amino-acid polypeptide reads, in one-letter code: Large ribosomal subunit protein bL19 (163 aa).

Residues 131 to 150 (ISQERKASGKDQASKPEVRP) show a composition bias toward basic and acidic residues. Residues 131–163 (ISQERKASGKDQASKPEVRPQGKKPAPKPKAKK) are disordered. Residues 151-163 (QGKKPAPKPKAKK) are compositionally biased toward basic residues.

It belongs to the bacterial ribosomal protein bL19 family.

In terms of biological role, this protein is located at the 30S-50S ribosomal subunit interface and may play a role in the structure and function of the aminoacyl-tRNA binding site. This is Large ribosomal subunit protein bL19 from Rhodospirillum rubrum (strain ATCC 11170 / ATH 1.1.1 / DSM 467 / LMG 4362 / NCIMB 8255 / S1).